Reading from the N-terminus, the 362-residue chain is Molybdenum import ATP-binding protein ModC (362 aa).

Residues 1-236 enclose the ABC transporter domain; it reads MTASGLYLNL…TQSPTAQGED (236 aa). 36 to 43 is an ATP binding site; the sequence is GPSGSGKT. Residues 297–362 form the Mop domain; sequence DSTILNKLAA…AQVKSVAIVG (66 aa).

This sequence belongs to the ABC transporter superfamily. Molybdate importer (TC 3.A.1.8) family. In terms of assembly, the complex is composed of two ATP-binding proteins (ModC), two transmembrane proteins (ModB) and a solute-binding protein (ModA).

It localises to the cell inner membrane. It carries out the reaction molybdate(out) + ATP + H2O = molybdate(in) + ADP + phosphate + H(+). In terms of biological role, part of the ABC transporter complex ModABC involved in molybdenum import. Responsible for energy coupling to the transport system. The sequence is that of Molybdenum import ATP-binding protein ModC from Saccharophagus degradans (strain 2-40 / ATCC 43961 / DSM 17024).